The following is a 421-amino-acid chain: Imidazolonepropionase (421 aa).

Positions 81 and 83 each coordinate Fe(3+). Zn(2+) is bound by residues His-81 and His-83. 4-imidazolone-5-propanoate is bound by residues Arg-90, Tyr-153, and His-186. Tyr-153 is a binding site for N-formimidoyl-L-glutamate. His-251 is a binding site for Fe(3+). Position 251 (His-251) interacts with Zn(2+). Glu-254 is a 4-imidazolone-5-propanoate binding site. Asp-326 is a Fe(3+) binding site. Zn(2+) is bound at residue Asp-326. N-formimidoyl-L-glutamate-binding residues include Asn-328 and Gly-330. Ser-331 contributes to the 4-imidazolone-5-propanoate binding site.

Belongs to the metallo-dependent hydrolases superfamily. HutI family. It depends on Zn(2+) as a cofactor. Fe(3+) is required as a cofactor.

The protein resides in the cytoplasm. The enzyme catalyses 4-imidazolone-5-propanoate + H2O = N-formimidoyl-L-glutamate. It participates in amino-acid degradation; L-histidine degradation into L-glutamate; N-formimidoyl-L-glutamate from L-histidine: step 3/3. In terms of biological role, catalyzes the hydrolytic cleavage of the carbon-nitrogen bond in imidazolone-5-propanoate to yield N-formimidoyl-L-glutamate. It is the third step in the universal histidine degradation pathway. This Streptococcus pyogenes serotype M1 protein is Imidazolonepropionase.